We begin with the raw amino-acid sequence, 117 residues long: Large ribosomal subunit protein uL18 (117 aa).

The protein belongs to the universal ribosomal protein uL18 family. Part of the 50S ribosomal subunit; part of the 5S rRNA/L5/L18/L25 subcomplex. Contacts the 5S and 23S rRNAs.

Its function is as follows. This is one of the proteins that bind and probably mediate the attachment of the 5S RNA into the large ribosomal subunit, where it forms part of the central protuberance. The chain is Large ribosomal subunit protein uL18 from Vibrio cholerae serotype O1 (strain ATCC 39541 / Classical Ogawa 395 / O395).